A 326-amino-acid chain; its full sequence is Adenosine receptor A1 (326 aa).

The Extracellular portion of the chain corresponds to Met1–Ala10. The chain crosses the membrane as a helical span at residues Ala11 to Ala33. The Cytoplasmic portion of the chain corresponds to Val34 to Cys46. A helical membrane pass occupies residues Phe47–Ile69. The Extracellular portion of the chain corresponds to Asn70–Cys80. A disulfide bridge links Cys80 with Cys169. A helical membrane pass occupies residues Leu81–Ala102. Residues Val103–Arg123 lie on the Cytoplasmic side of the membrane. Residues Ala124–Trp146 form a helical membrane-spanning segment. The Extracellular portion of the chain corresponds to Asn147 to Ser176. N-linked (GlcNAc...) asparagine glycosylation occurs at Asn159. The chain crosses the membrane as a helical span at residues Met177–Leu201. The Cytoplasmic segment spans residues Glu202–Ser235. Residues Leu236–Phe259 traverse the membrane as a helical segment. The Extracellular portion of the chain corresponds to Cys260–Ser267. Residues Ile268 to Ile292 traverse the membrane as a helical segment. Residues Gln293–Asp326 are Cytoplasmic-facing. Cys309 carries S-palmitoyl cysteine lipidation.

The protein belongs to the G-protein coupled receptor 1 family.

It localises to the cell membrane. Its function is as follows. Receptor for adenosine. The activity of this receptor is mediated by G proteins which inhibit adenylyl cyclase. The polypeptide is Adenosine receptor A1 (ADORA1) (Canis lupus familiaris (Dog)).